The primary structure comprises 214 residues: Cell division protein B1 (214 aa).

Functionally, part of a cell division machinery. This Sulfolobus acidocaldarius (strain ATCC 33909 / DSM 639 / JCM 8929 / NBRC 15157 / NCIMB 11770) protein is Cell division protein B1.